The sequence spans 635 residues: Interferon-induced GTP-binding protein Mx1 (635 aa).

Positions 31–309 constitute a Dynamin-type G domain; it reads DLALPAIAVI…LVHHIELSLP (279 aa). Residues 41-48 form a G1 motif region; sequence GDQSSGKS. A GTP-binding site is contributed by 41-48; sequence GDQSSGKS. Positions 66–68 are G2 motif; that stretch reads VTR. Residues 147–150 form a G3 motif region; sequence DLPG. Residues 147-151 and 216-219 contribute to the GTP site; these read DLPGI and TKPD. The interval 216-219 is G4 motif; sequence TKPD. The segment at 248 to 251 is G5 motif; the sequence is RCRG. The region spanning 549–635 is the GED domain; it reads LEELMRHLKS…MEARNYLVKF (87 aa).

It belongs to the TRAFAC class dynamin-like GTPase superfamily. Dynamin/Fzo/YdjA family.

Its subcellular location is the cytoplasm. This is Interferon-induced GTP-binding protein Mx1 (mx1) from Ictalurus punctatus (Channel catfish).